Here is a 407-residue protein sequence, read N- to C-terminus: Argininosuccinate synthase (407 aa).

Residues 16 to 24 (AYSGGLDTS) and alanine 44 contribute to the ATP site. L-citrulline is bound by residues tyrosine 96 and serine 101. Glycine 126 contributes to the ATP binding site. L-aspartate is bound by residues threonine 128, asparagine 132, and aspartate 133. Position 132 (asparagine 132) interacts with L-citrulline. L-citrulline contacts are provided by arginine 136, serine 185, serine 194, glutamate 270, and tyrosine 282.

This sequence belongs to the argininosuccinate synthase family. Type 1 subfamily. As to quaternary structure, homotetramer.

It localises to the cytoplasm. The catalysed reaction is L-citrulline + L-aspartate + ATP = 2-(N(omega)-L-arginino)succinate + AMP + diphosphate + H(+). It participates in amino-acid biosynthesis; L-arginine biosynthesis; L-arginine from L-ornithine and carbamoyl phosphate: step 2/3. The sequence is that of Argininosuccinate synthase from Shewanella sediminis (strain HAW-EB3).